The primary structure comprises 77 residues: Small ribosomal subunit protein bS21 (77 aa).

Belongs to the bacterial ribosomal protein bS21 family.

In Methylococcus capsulatus (strain ATCC 33009 / NCIMB 11132 / Bath), this protein is Small ribosomal subunit protein bS21.